A 510-amino-acid chain; its full sequence is Replication factor C large subunit (510 aa).

Gly-48–Thr-55 is a binding site for ATP. Positions Met-459–Phe-510 are disordered. Over residues Glu-493–Phe-510 the composition is skewed to basic and acidic residues.

The protein belongs to the activator 1 small subunits family. RfcL subfamily. Heteromultimer composed of small subunits (RfcS) and large subunits (RfcL).

Functionally, part of the RFC clamp loader complex which loads the PCNA sliding clamp onto DNA. This is Replication factor C large subunit from Methanopyrus kandleri (strain AV19 / DSM 6324 / JCM 9639 / NBRC 100938).